A 436-amino-acid polypeptide reads, in one-letter code: 3-ketoacyl-CoA thiolase (436 aa).

Cys99 serves as the catalytic Acyl-thioester intermediate. Residues His392 and Cys422 each act as proton acceptor in the active site.

The protein belongs to the thiolase-like superfamily. Thiolase family. In terms of assembly, heterotetramer of two alpha chains (FadJ) and two beta chains (FadI).

The protein resides in the cytoplasm. It carries out the reaction an acyl-CoA + acetyl-CoA = a 3-oxoacyl-CoA + CoA. The protein operates within lipid metabolism; fatty acid beta-oxidation. Its function is as follows. Catalyzes the final step of fatty acid oxidation in which acetyl-CoA is released and the CoA ester of a fatty acid two carbons shorter is formed. This is 3-ketoacyl-CoA thiolase from Shewanella sediminis (strain HAW-EB3).